The chain runs to 462 residues: Fumarate hydratase class II (462 aa).

Substrate-binding positions include 97–99 (SGT), 127–130 (HPND), 137–139 (SSN), and Thr185. Residue His186 is the Proton donor/acceptor of the active site. Residue Ser316 is part of the active site. Substrate contacts are provided by residues Ser317 and 322–324 (KVN).

It belongs to the class-II fumarase/aspartase family. Fumarase subfamily. Homotetramer.

It is found in the cytoplasm. The catalysed reaction is (S)-malate = fumarate + H2O. It participates in carbohydrate metabolism; tricarboxylic acid cycle; (S)-malate from fumarate: step 1/1. Functionally, involved in the TCA cycle. Catalyzes the stereospecific interconversion of fumarate to L-malate. The sequence is that of Fumarate hydratase class II from Bacillus subtilis (strain 168).